A 285-amino-acid chain; its full sequence is ATP synthase subunit a (285 aa).

6 helical membrane-spanning segments follow: residues 41-61 (TWHV…LWIF), 102-122 (IAPL…MDLI), 164-184 (LGVF…GGFI), 197-217 (VFVQ…ALVS), 226-246 (LFGN…IGFM), and 252-272 (FVWA…FMML).

This sequence belongs to the ATPase A chain family. In terms of assembly, F-type ATPases have 2 components, CF(1) - the catalytic core - and CF(0) - the membrane proton channel. CF(1) has five subunits: alpha(3), beta(3), gamma(1), delta(1), epsilon(1). CF(0) has three main subunits: a(1), b(2) and c(9-12). The alpha and beta chains form an alternating ring which encloses part of the gamma chain. CF(1) is attached to CF(0) by a central stalk formed by the gamma and epsilon chains, while a peripheral stalk is formed by the delta and b chains.

The protein localises to the cell inner membrane. Functionally, key component of the proton channel; it plays a direct role in the translocation of protons across the membrane. This Pseudoalteromonas translucida (strain TAC 125) protein is ATP synthase subunit a.